The following is a 970-amino-acid chain: Phosphoenolpyruvate carboxylase 1 (970 aa).

Phosphoserine is present on S15. Active-site residues include H177, K606, and R647.

Belongs to the PEPCase type 1 family. As to quaternary structure, homotetramer. Mg(2+) serves as cofactor.

The protein resides in the cytoplasm. It carries out the reaction oxaloacetate + phosphate = phosphoenolpyruvate + hydrogencarbonate. It functions in the pathway photosynthesis; C4 acid pathway. By light-reversible phosphorylation. Through the carboxylation of phosphoenolpyruvate (PEP) it forms oxaloacetate, a four-carbon dicarboxylic acid source for the tricarboxylic acid cycle. The sequence is that of Phosphoenolpyruvate carboxylase 1 (PEP1) from Zea mays (Maize).